Here is a 133-residue protein sequence, read N- to C-terminus: Putative pre-16S rRNA nuclease (133 aa).

This sequence belongs to the YqgF nuclease family.

Its subcellular location is the cytoplasm. Functionally, could be a nuclease involved in processing of the 5'-end of pre-16S rRNA. The sequence is that of Putative pre-16S rRNA nuclease from Bordetella bronchiseptica (strain ATCC BAA-588 / NCTC 13252 / RB50) (Alcaligenes bronchisepticus).